The following is a 261-amino-acid chain: MSDILDRIIDVKRQEVRAAQQSAPLEELRLQASTRDLRDFVGAIRAKHEAGLAAVIAEVKKASPSKGVLREHFVPADIARSYANHGAACLSVLTDVQFFKGSAQYLEEARAACQLPVLRKDFIVDPYQILEARAMGADAILLIVAALETSQMQDLEAYAHSLGLAVLVEVHDKDELVEALTLKTPLIGVNNRNLRTFETSIDTTLGLLDMMPDDRIVVTESGILSRTDVERMRAMDVNTFLVGEAFMRADEPGVELARMFF.

Belongs to the TrpC family.

The catalysed reaction is 1-(2-carboxyphenylamino)-1-deoxy-D-ribulose 5-phosphate + H(+) = (1S,2R)-1-C-(indol-3-yl)glycerol 3-phosphate + CO2 + H2O. It participates in amino-acid biosynthesis; L-tryptophan biosynthesis; L-tryptophan from chorismate: step 4/5. The polypeptide is Indole-3-glycerol phosphate synthase (Paraburkholderia phymatum (strain DSM 17167 / CIP 108236 / LMG 21445 / STM815) (Burkholderia phymatum)).